The sequence spans 418 residues: RuvB-like helicase 2 (418 aa).

65–72 lines the ATP pocket; it reads GDRGSGKT.

Belongs to the RuvB family. As to quaternary structure, component of the SWR1 chromatin remodeling complex, the INO80 chromatin remodeling complex, and of the R2TP complex.

It localises to the nucleus. It carries out the reaction ATP + H2O = ADP + phosphate + H(+). In terms of biological role, DNA helicase which participates in several chromatin remodeling complexes, including the SWR1 and the INO80 complexes. The SWR1 complex mediates the ATP-dependent exchange of histone H2A for the H2A variant HZT1 leading to transcriptional regulation of selected genes by chromatin remodeling. The INO80 complex remodels chromatin by shifting nucleosomes and is involved in DNA repair. Also involved in pre-rRNA processing. This Encephalitozoon cuniculi (strain GB-M1) (Microsporidian parasite) protein is RuvB-like helicase 2 (RVB2).